Reading from the N-terminus, the 200-residue chain is MIGLFLAAPLVLSSAVWANPQQELSSRLSLVNAFSANFDQKVVSPEGDVLVEGKGDVTIKRPNLFRWNTVTPDENLLVSDGKTLWYYSPFIEQVTAMWLKDATEQTPFVLLTRNSASDWDNYNVAQTSDTFTLTPKDTTSTMGKFVVTVAKTGEVRNFSVVEQDGQRSNFKFRQFSKQVPKANIFTFTPPKGVELDDQRN.

The N-terminal stretch at 1–18 (MIGLFLAAPLVLSSAVWA) is a signal peptide.

This sequence belongs to the LolA family. Monomer.

Its subcellular location is the periplasm. Functionally, participates in the translocation of lipoproteins from the inner membrane to the outer membrane. Only forms a complex with a lipoprotein if the residue after the N-terminal Cys is not an aspartate (The Asp acts as a targeting signal to indicate that the lipoprotein should stay in the inner membrane). The protein is Outer-membrane lipoprotein carrier protein of Photobacterium profundum (strain SS9).